The sequence spans 345 residues: MSTPTPLSYKDAGVDIDAGNALVSNIKAAVKRTRRPEVMGNLGGFGALCELPTKYKQPVLVSGTDGVGTKLRLAIDYKKHDTVGIDLVAMCVNDLIVQGAEPLFFLDYYATGKLDVETATSVVNGIGEGCFQSGCALIGGETAEMPGMYEGEDYDLAGFCVGVVEKADIIDGSKVAAGDALIALASSGPHSNGYSLVRKVLEVSQADPQQDLNGKPLIQHLLEPTKIYVKSLLKLIEASDVHAMAHITGGGFWENIPRVLPENCKAVIQGDSWQWPAVFNWLMENGNIAEYEMYRTFNCGVGMIVALPADKVDAALALLAAEGEQAWLIGAIAAREGNEEQVEIL.

The protein belongs to the AIR synthase family.

It is found in the cytoplasm. It carries out the reaction 2-formamido-N(1)-(5-O-phospho-beta-D-ribosyl)acetamidine + ATP = 5-amino-1-(5-phospho-beta-D-ribosyl)imidazole + ADP + phosphate + H(+). Its pathway is purine metabolism; IMP biosynthesis via de novo pathway; 5-amino-1-(5-phospho-D-ribosyl)imidazole from N(2)-formyl-N(1)-(5-phospho-D-ribosyl)glycinamide: step 2/2. The polypeptide is Phosphoribosylformylglycinamidine cyclo-ligase (Shewanella sp. (strain ANA-3)).